The following is a 424-amino-acid chain: Glutamate-1-semialdehyde 2,1-aminomutase (424 aa).

Position 263 is an N6-(pyridoxal phosphate)lysine (K263).

It belongs to the class-III pyridoxal-phosphate-dependent aminotransferase family. HemL subfamily. In terms of assembly, homodimer. Requires pyridoxal 5'-phosphate as cofactor.

The protein resides in the cytoplasm. It carries out the reaction (S)-4-amino-5-oxopentanoate = 5-aminolevulinate. It participates in porphyrin-containing compound metabolism; protoporphyrin-IX biosynthesis; 5-aminolevulinate from L-glutamyl-tRNA(Glu): step 2/2. The sequence is that of Glutamate-1-semialdehyde 2,1-aminomutase from Campylobacter jejuni subsp. jejuni serotype O:6 (strain 81116 / NCTC 11828).